The primary structure comprises 285 residues: Seed agglutinin 2 (285 aa).

The first 31 residues, Met1–Ser31, serve as a signal peptide directing secretion. Asn147 is a glycosylation site (N-linked (GlcNAc...) asparagine). 2 residues coordinate Mn(2+): Glu156 and Asp158. Ca(2+)-binding residues include Asp158, Asn162, and Asp166. 2 residues coordinate Mn(2+): Asp166 and His171.

The protein belongs to the leguminous lectin family. In terms of assembly, homotetramer. Mostly found in non-glycosylated form. As to expression, expressed in seed.

Functionally, seed lectin. The polypeptide is Seed agglutinin 2 (Robinia pseudoacacia (Black locust)).